The sequence spans 127 residues: Methylglyoxal synthase (127 aa).

Residues 1–127 enclose the MGS-like domain; it reads MEKKIALIAH…IKGLESLILR (127 aa). Residues H10, K14, 36–39, and 56–57 contribute to the substrate site; these read TGTT and SG. D62 serves as the catalytic Proton donor/acceptor. H89 contributes to the substrate binding site.

The protein belongs to the methylglyoxal synthase family.

The enzyme catalyses dihydroxyacetone phosphate = methylglyoxal + phosphate. In terms of biological role, catalyzes the formation of methylglyoxal from dihydroxyacetone phosphate. The chain is Methylglyoxal synthase from Borreliella afzelii (strain PKo) (Borrelia afzelii).